A 123-amino-acid polypeptide reads, in one-letter code: Small ribosomal subunit protein uS12 (123 aa).

A 3-methylthioaspartic acid modification is found at Asp-89.

The protein belongs to the universal ribosomal protein uS12 family. Part of the 30S ribosomal subunit. Contacts proteins S8 and S17. May interact with IF1 in the 30S initiation complex.

Functionally, with S4 and S5 plays an important role in translational accuracy. Interacts with and stabilizes bases of the 16S rRNA that are involved in tRNA selection in the A site and with the mRNA backbone. Located at the interface of the 30S and 50S subunits, it traverses the body of the 30S subunit contacting proteins on the other side and probably holding the rRNA structure together. The combined cluster of proteins S8, S12 and S17 appears to hold together the shoulder and platform of the 30S subunit. The chain is Small ribosomal subunit protein uS12 from Methylobacterium radiotolerans (strain ATCC 27329 / DSM 1819 / JCM 2831 / NBRC 15690 / NCIMB 10815 / 0-1).